The sequence spans 250 residues: Ribonuclease HII (250 aa).

Positions 66-250 constitute an RNase H type-2 domain; it reads QLVAGVDEVG…SFAPVSEYEK (185 aa). A divalent metal cation-binding residues include aspartate 72, glutamate 73, and aspartate 164.

This sequence belongs to the RNase HII family. Mn(2+) serves as cofactor. The cofactor is Mg(2+).

The protein resides in the cytoplasm. It carries out the reaction Endonucleolytic cleavage to 5'-phosphomonoester.. Endonuclease that specifically degrades the RNA of RNA-DNA hybrids. In Lactobacillus johnsonii (strain CNCM I-12250 / La1 / NCC 533), this protein is Ribonuclease HII.